A 396-amino-acid polypeptide reads, in one-letter code: Tryptophan synthase beta chain (396 aa).

Residue K90 is modified to N6-(pyridoxal phosphate)lysine.

The protein belongs to the TrpB family. Tetramer of two alpha and two beta chains. The cofactor is pyridoxal 5'-phosphate.

It catalyses the reaction (1S,2R)-1-C-(indol-3-yl)glycerol 3-phosphate + L-serine = D-glyceraldehyde 3-phosphate + L-tryptophan + H2O. It functions in the pathway amino-acid biosynthesis; L-tryptophan biosynthesis; L-tryptophan from chorismate: step 5/5. The beta subunit is responsible for the synthesis of L-tryptophan from indole and L-serine. This Clostridium kluyveri (strain NBRC 12016) protein is Tryptophan synthase beta chain.